The following is a 190-amino-acid chain: Probable RNA-binding protein 18 (190 aa).

The region spanning 25-106 (HRLWIGNVDP…KKLVVRWAHA (82 aa)) is the RRM domain.

In Xenopus laevis (African clawed frog), this protein is Probable RNA-binding protein 18 (rbm18).